The primary structure comprises 245 residues: Probable phosphatase YPTB2019 (245 aa).

9 residues coordinate Zn(2+): H7, H9, H15, H40, E73, H101, H131, D192, and H194.

It belongs to the PHP family. As to quaternary structure, homotrimer. The cofactor is Zn(2+).

The chain is Probable phosphatase YPTB2019 from Yersinia pseudotuberculosis serotype I (strain IP32953).